We begin with the raw amino-acid sequence, 434 residues long: Methylenetetrahydrofolate--tRNA-(uracil-5-)-methyltransferase TrmFO (434 aa).

9 to 14 is a binding site for FAD; it reads GAGLAG.

It belongs to the MnmG family. TrmFO subfamily. FAD is required as a cofactor.

It is found in the cytoplasm. It catalyses the reaction uridine(54) in tRNA + (6R)-5,10-methylene-5,6,7,8-tetrahydrofolate + NADH + H(+) = 5-methyluridine(54) in tRNA + (6S)-5,6,7,8-tetrahydrofolate + NAD(+). The catalysed reaction is uridine(54) in tRNA + (6R)-5,10-methylene-5,6,7,8-tetrahydrofolate + NADPH + H(+) = 5-methyluridine(54) in tRNA + (6S)-5,6,7,8-tetrahydrofolate + NADP(+). Functionally, catalyzes the folate-dependent formation of 5-methyl-uridine at position 54 (M-5-U54) in all tRNAs. The protein is Methylenetetrahydrofolate--tRNA-(uracil-5-)-methyltransferase TrmFO of Listeria monocytogenes serotype 4b (strain F2365).